The chain runs to 257 residues: Transmembrane protein C257L (257 aa).

2 consecutive transmembrane segments (helical) span residues 123-143 and 163-183; these read LELL…FTAL and IMIF…YVLV.

This sequence belongs to the asfivirus C257R family.

The protein localises to the host membrane. Its subcellular location is the virion. The protein is Transmembrane protein C257L of African swine fever virus (isolate Pig/Kenya/KEN-50/1950) (ASFV).